We begin with the raw amino-acid sequence, 583 residues long: Protein translocase subunit SecD (583 aa).

6 helical membrane-spanning segments follow: residues 7–27 (FGVVLVVLAACSGFLFPTLQW), 419–439 (LVWGLCAVLLFMLVWYQEAGV), 446–468 (LLNLYIMFGVLSAFNLTLTLSSI), 469–489 (AGMILTIGMAVDANVVVFERI), 511–531 (FWAIMDSNVTTFIAALFLSVL), and 538–558 (GFAYSLAIGVVSSVFTALFVS).

It belongs to the SecD/SecF family. SecD subfamily. Forms a complex with SecF. Part of the essential Sec protein translocation apparatus which comprises SecA, SecYEG and auxiliary proteins SecDF. Other proteins may also be involved.

The protein resides in the cell inner membrane. Its function is as follows. Part of the Sec protein translocase complex. Interacts with the SecYEG preprotein conducting channel. SecDF uses the proton motive force (PMF) to complete protein translocation after the ATP-dependent function of SecA. The protein is Protein translocase subunit SecD of Treponema pallidum (strain Nichols).